The primary structure comprises 535 residues: RNA-splicing ligase RtcB homolog 1 (535 aa).

Positions 1 to 16 (MAKSRYSRKNKGKKLQ) are enriched in basic residues. Residues 1-29 (MAKSRYSRKNKGKKLQRVQENTVSTEEKS) are disordered. Positions 152, 155, 260, 292, and 383 each coordinate Mn(2+). 259–263 (NHYLE) provides a ligand contact to GMP. GMP contacts are provided by residues 383 to 384 (HN), 432 to 435 (GGSM), Ser-439, 458 to 461 (HGAG), and Lys-534. His-458 acts as the GMP-histidine intermediate in catalysis.

It belongs to the RtcB family. As to quaternary structure, catalytic component of the tRNA-splicing ligase complex. Requires Mn(2+) as cofactor.

The enzyme catalyses a 3'-end 3'-phospho-ribonucleotide-RNA + a 5'-end dephospho-ribonucleoside-RNA + GTP = a ribonucleotidyl-ribonucleotide-RNA + GMP + diphosphate. It carries out the reaction a 3'-end 2',3'-cyclophospho-ribonucleotide-RNA + a 5'-end dephospho-ribonucleoside-RNA + GTP + H2O = a ribonucleotidyl-ribonucleotide-RNA + GMP + diphosphate + H(+). Catalytic subunit of the tRNA-splicing ligase complex that acts by directly joining spliced tRNA halves to mature-sized tRNAs by incorporating the precursor-derived splice junction phosphate into the mature tRNA as a canonical 3',5'-phosphodiester. May act as an RNA ligase with broad substrate specificity, and may function toward other RNAs. The polypeptide is RNA-splicing ligase RtcB homolog 1 (Entamoeba dispar (strain ATCC PRA-260 / SAW760)).